A 92-amino-acid chain; its full sequence is Bombyxin A-6 (92 aa).

The signal sequence occupies residues 1–19 (MKILLAIALMLSTVMWVST). The residue at position 20 (Gln-20) is a Pyrrolidone carboxylic acid. 3 cysteine pairs are disulfide-bonded: Cys-29–Cys-79, Cys-41–Cys-92, and Cys-78–Cys-83. Residues 50-70 (SGAQFASYGSAWLMPYSEGRG) constitute a propeptide, c peptide like.

Belongs to the insulin family. Heterodimer of a B chain and an A chain linked by two disulfide bonds.

Its subcellular location is the secreted. Functionally, brain peptide responsible for activation of prothoracic glands to produce ecdysone in insects. In Bombyx mori (Silk moth), this protein is Bombyxin A-6 (BBXA6).